Consider the following 260-residue polypeptide: Ribosomal RNA small subunit methyltransferase J (260 aa).

Residues 108-109, 124-125, and aspartate 178 contribute to the S-adenosyl-L-methionine site; these read RD and ER.

This sequence belongs to the methyltransferase superfamily. RsmJ family.

It localises to the cytoplasm. The enzyme catalyses guanosine(1516) in 16S rRNA + S-adenosyl-L-methionine = N(2)-methylguanosine(1516) in 16S rRNA + S-adenosyl-L-homocysteine + H(+). Specifically methylates the guanosine in position 1516 of 16S rRNA. This chain is Ribosomal RNA small subunit methyltransferase J, found in Ectopseudomonas mendocina (strain ymp) (Pseudomonas mendocina).